The primary structure comprises 196 residues: NADH dehydrogenase [ubiquinone] 1 alpha subcomplex assembly factor 3 (196 aa).

A mitochondrion-targeting transit peptide spans 1-93 (MIARTLRTVG…RSVLSWNVNS (93 aa)).

Belongs to the NDUFAF3 family. As to quaternary structure, together with NdufAF4 associates with mitochondrial complex I assembly intermediates during its biogenesis.

Its subcellular location is the mitochondrion. Involved in the assembly of mitochondrial NADH:ubiquinone oxidoreductase complex (complex I). Together with NdufAF4, involved in biogenesis of complex 1 modules N, Q and P-peripheral, but not the P-distal module. Required for recruitment of the complex I assembly factor Timmdc1 to complex 1 assembly intermediates. The protein is NADH dehydrogenase [ubiquinone] 1 alpha subcomplex assembly factor 3 of Drosophila melanogaster (Fruit fly).